The primary structure comprises 133 residues: Small ribosomal subunit protein uS8 (133 aa).

Belongs to the universal ribosomal protein uS8 family. Part of the 30S ribosomal subunit. Contacts proteins S5 and S12.

In terms of biological role, one of the primary rRNA binding proteins, it binds directly to 16S rRNA central domain where it helps coordinate assembly of the platform of the 30S subunit. This Chlamydia trachomatis serovar L2b (strain UCH-1/proctitis) protein is Small ribosomal subunit protein uS8.